Here is a 211-residue protein sequence, read N- to C-terminus: Putative ATP-dependent Clp protease proteolytic subunit-like (211 aa).

Residues 1–24 (MTRPSARHVLPEFTERTSAGTRTS) form a disordered region. H129 is an active-site residue.

This sequence belongs to the peptidase S14 family.

Functionally, has lost one of the conserved residue (Ser) proposed to be part of the active site. Therefore it could be inactive. The sequence is that of Putative ATP-dependent Clp protease proteolytic subunit-like from Streptomyces coelicolor (strain ATCC BAA-471 / A3(2) / M145).